Here is a 391-residue protein sequence, read N- to C-terminus: ATP phosphoribosyltransferase regulatory subunit (391 aa).

The protein belongs to the class-II aminoacyl-tRNA synthetase family. HisZ subfamily. In terms of assembly, heteromultimer composed of HisG and HisZ subunits.

The protein resides in the cytoplasm. Its pathway is amino-acid biosynthesis; L-histidine biosynthesis; L-histidine from 5-phospho-alpha-D-ribose 1-diphosphate: step 1/9. Functionally, required for the first step of histidine biosynthesis. May allow the feedback regulation of ATP phosphoribosyltransferase activity by histidine. In Nitrosomonas europaea (strain ATCC 19718 / CIP 103999 / KCTC 2705 / NBRC 14298), this protein is ATP phosphoribosyltransferase regulatory subunit.